The sequence spans 99 residues: Beta-defensin 127 (99 aa).

The N-terminal stretch at 1 to 20 is a signal peptide; that stretch reads MGLFMIIAILLFQKPTVTEQ. 3 disulfide bridges follow: C24-C53, C33-C47, and C37-C54. Positions 66-99 are excised as a propeptide; that stretch reads ITKPSHPKPATLALTLQDYVTIIENFPSLKTQST.

It belongs to the beta-defensin family.

Its subcellular location is the secreted. Has antibacterial activity. The protein is Beta-defensin 127 (DEFB127) of Pan troglodytes (Chimpanzee).